Reading from the N-terminus, the 301-residue chain is HTH-type transcriptional activator NagR (301 aa).

Positions 6–63 constitute an HTH lysR-type domain; that stretch reads IDLNLLVVFNQLLLDRSVSTAGEKLGLTQPAVSNSLKRLRAALKDDLFLRTSKGMEPT. Residues 23–42 constitute a DNA-binding region (H-T-H motif); sequence VSTAGEKLGLTQPAVSNSLK.

It belongs to the LysR transcriptional regulatory family.

Its function is as follows. May regulate the expression of the naphthalene (nagA-F) and salicylate (nagG-M) metabolism genes. The polypeptide is HTH-type transcriptional activator NagR (Ralstonia sp).